The chain runs to 500 residues: Glycerol kinase (500 aa).

ADP is bound at residue threonine 15. ATP is bound by residues threonine 15, threonine 16, and serine 17. Residue threonine 15 participates in sn-glycerol 3-phosphate binding. Arginine 19 contributes to the ADP binding site. Sn-glycerol 3-phosphate is bound by residues arginine 85, glutamate 86, tyrosine 137, and aspartate 245. Glycerol-binding residues include arginine 85, glutamate 86, tyrosine 137, aspartate 245, and glutamine 246. The ADP site is built by threonine 267 and glycine 310. 4 residues coordinate ATP: threonine 267, glycine 310, glutamine 314, and glycine 411. 2 residues coordinate ADP: glycine 411 and asparagine 415.

The protein belongs to the FGGY kinase family.

The catalysed reaction is glycerol + ATP = sn-glycerol 3-phosphate + ADP + H(+). The protein operates within polyol metabolism; glycerol degradation via glycerol kinase pathway; sn-glycerol 3-phosphate from glycerol: step 1/1. With respect to regulation, inhibited by fructose 1,6-bisphosphate (FBP). Key enzyme in the regulation of glycerol uptake and metabolism. Catalyzes the phosphorylation of glycerol to yield sn-glycerol 3-phosphate. This Aeromonas hydrophila subsp. hydrophila (strain ATCC 7966 / DSM 30187 / BCRC 13018 / CCUG 14551 / JCM 1027 / KCTC 2358 / NCIMB 9240 / NCTC 8049) protein is Glycerol kinase.